A 245-amino-acid polypeptide reads, in one-letter code: MIIPALDLIDGTVVRLHQGDYGKQRDYGNDPLPRLQDYAAQGAEVLHLVDLTGAKDPAKRQIPLIKTLVAGVNVPVQVGGGVRSEEDVAALLEAGVARVVVGSTAVKSPDMVKGWFERFGADALVLALDVRIDEQGNKQVAVSGWQENSGVSLEQLVETYLPVGLKHVLCTDISRDGTLAGSNVSLYEEVCARYPQVAFQSSGGIGEINDVAALRGTGVRGVIVGRALLEGKFTVKEAIACWQNA.

Residue Asp7 is the Proton acceptor of the active site. The Proton donor role is filled by Asp129.

This sequence belongs to the HisA/HisF family.

It is found in the cytoplasm. It carries out the reaction 1-(5-phospho-beta-D-ribosyl)-5-[(5-phospho-beta-D-ribosylamino)methylideneamino]imidazole-4-carboxamide = 5-[(5-phospho-1-deoxy-D-ribulos-1-ylimino)methylamino]-1-(5-phospho-beta-D-ribosyl)imidazole-4-carboxamide. The protein operates within amino-acid biosynthesis; L-histidine biosynthesis; L-histidine from 5-phospho-alpha-D-ribose 1-diphosphate: step 4/9. The chain is 1-(5-phosphoribosyl)-5-[(5-phosphoribosylamino)methylideneamino] imidazole-4-carboxamide isomerase from Escherichia coli O7:K1 (strain IAI39 / ExPEC).